The chain runs to 352 residues: Ubiquitin thioesterase otulin (352 aa).

The disordered stretch occupies residues Met1–Pro48. The span at Ala18–Ala37 shows a compositional bias: low complexity. A PIM motif motif is present at residues Glu52–Arg57. Tyr56 carries the phosphotyrosine modification. Linear diubiquitin binding stretches follow at residues Glu95–Trp96 and Arg124–Asp126. In terms of domain architecture, OTU spans Thr118–Val346. Residue Asp126 is part of the active site. Cys129 serves as the catalytic Nucleophile. Linear diubiquitin binding regions lie at residues Phe255–Leu259, Thr283–Val289, and Asp336–Arg338. Residue His339 is part of the active site.

This sequence belongs to the peptidase C65 family. Otulin subfamily. Interacts (via the PUB domain) with RNF31 (via the PIM motif); the interaction is direct. Interacts with DVL2. In terms of processing, ubiquitinated. Post-translationally, acetylated. Phosphorylated. Phosphorylation at Tyr-56 prevents interaction with RNF31; dephosphorylation promotes interaction with RNF31 and the LUBAC complex.

It localises to the cytoplasm. The enzyme catalyses Thiol-dependent hydrolysis of ester, thioester, amide, peptide and isopeptide bonds formed by the C-terminal Gly of ubiquitin (a 76-residue protein attached to proteins as an intracellular targeting signal).. Its function is as follows. Deubiquitinase that specifically removes linear ('Met-1'-linked) polyubiquitin chains to substrates and acts as a regulator of angiogenesis and innate immune response. Required during angiogenesis, craniofacial and neuronal development by regulating the canonical Wnt signaling together with the LUBAC complex. Acts as a negative regulator of NF-kappa-B by regulating the activity of the LUBAC complex. OTULIN function is mainly restricted to homeostasis of the LUBAC complex: acts by removing 'Met-1'-linked autoubiquitination of the LUBAC complex, thereby preventing inactivation of the LUBAC complex. Acts as a key negative regulator of inflammation by restricting spontaneous inflammation and maintaining immune homeostasis. In myeloid cell, required to prevent unwarranted secretion of cytokines leading to inflammation and autoimmunity by restricting linear polyubiquitin formation. Plays a role in innate immune response by restricting linear polyubiquitin formation on LUBAC complex in response to NOD2 stimulation, probably to limit NOD2-dependent pro-inflammatory signaling. This Homo sapiens (Human) protein is Ubiquitin thioesterase otulin.